A 65-amino-acid chain; its full sequence is Toxin Cbi1 (65 aa).

The LCN-type CS-alpha/beta domain maps to lysine 1 to arginine 64. Disulfide bonds link cysteine 11-cysteine 63, cysteine 15-cysteine 37, cysteine 22-cysteine 44, and cysteine 26-cysteine 46.

This sequence belongs to the long (4 C-C) scorpion toxin superfamily. Sodium channel inhibitor family. Beta subfamily. As to expression, expressed by the venom gland.

Its subcellular location is the secreted. Its function is as follows. Beta toxins bind voltage-independently at site-4 of sodium channels (Nav) and shift the voltage of activation toward more negative potentials thereby affecting sodium channel activation and promoting spontaneous and repetitive firing. This chain is Toxin Cbi1, found in Centruroides bicolor (Scorpion).